The sequence spans 110 residues: PTS system oligo-beta-mannoside-specific EIIA component (110 aa).

A PTS EIIA type-3 domain is found at 9-107; it reads LTDEQISFQL…VKEMLDLFKT (99 aa). Residue histidine 83 is the Tele-phosphohistidine intermediate of the active site. Histidine 83 is subject to Phosphohistidine; by HPr.

Its subcellular location is the cytoplasm. Its function is as follows. The phosphoenolpyruvate-dependent sugar phosphotransferase system (sugar PTS), a major carbohydrate active transport system, catalyzes the phosphorylation of incoming sugar substrates concomitantly with their translocation across the cell membrane. The enzyme II GmuABC PTS system is involved in the transport of oligo-glucomannans such as cellobiose or mannobiose. The polypeptide is PTS system oligo-beta-mannoside-specific EIIA component (Bacillus subtilis (strain 168)).